The chain runs to 449 residues: UDP-N-acetylmuramoylalanine--D-glutamate ligase (449 aa).

116 to 122 is a binding site for ATP; it reads GSNGKST.

The protein belongs to the MurCDEF family.

It is found in the cytoplasm. It catalyses the reaction UDP-N-acetyl-alpha-D-muramoyl-L-alanine + D-glutamate + ATP = UDP-N-acetyl-alpha-D-muramoyl-L-alanyl-D-glutamate + ADP + phosphate + H(+). Its pathway is cell wall biogenesis; peptidoglycan biosynthesis. Functionally, cell wall formation. Catalyzes the addition of glutamate to the nucleotide precursor UDP-N-acetylmuramoyl-L-alanine (UMA). This Shewanella violacea (strain JCM 10179 / CIP 106290 / LMG 19151 / DSS12) protein is UDP-N-acetylmuramoylalanine--D-glutamate ligase.